The following is a 760-amino-acid chain: Xaa-Pro dipeptidyl-peptidase (760 aa).

Active-site charge relay system residues include Ser-349, Asp-469, and His-499.

This sequence belongs to the peptidase S15 family. In terms of assembly, homodimer.

The protein localises to the cytoplasm. It catalyses the reaction Hydrolyzes Xaa-Pro-|- bonds to release unblocked, N-terminal dipeptides from substrates including Ala-Pro-|-p-nitroanilide and (sequentially) Tyr-Pro-|-Phe-Pro-|-Gly-Pro-|-Ile.. Removes N-terminal dipeptides sequentially from polypeptides having unsubstituted N-termini provided that the penultimate residue is proline. The sequence is that of Xaa-Pro dipeptidyl-peptidase from Streptococcus pyogenes serotype M6 (strain ATCC BAA-946 / MGAS10394).